We begin with the raw amino-acid sequence, 144 residues long: Transcriptional regulator SlyA (144 aa).

Residues 2 to 135 enclose the HTH marR-type domain; it reads ESSLGSDLAR…LNNIIAKLER (134 aa). The H-T-H motif DNA-binding region spans 49–72; the sequence is QIQLAKAIGIEQPSLVRTLDQLES.

It belongs to the SlyA family. As to quaternary structure, homodimer.

Transcription regulator that can specifically activate or repress expression of target genes. In Blochmanniella floridana, this protein is Transcriptional regulator SlyA.